The sequence spans 239 residues: Flagellin B3 (239 aa).

The propeptide occupies methionine 1–glycine 11. Residues asparagine 115 and asparagine 128 are each glycosylated (N-linked (GlcNAc...) asparagine).

It belongs to the archaeal flagellin family. N-linked glycans consist of the 779 Da trisaccharide beta-ManNAc(Thr)-(1-4)-beta-GlcNAc3NAcA-(1-3)-beta-GlcNAc.

It is found in the archaeal flagellum. Its function is as follows. Flagellin is the subunit protein which polymerizes to form the filaments of archaeal flagella. The sequence is that of Flagellin B3 (flaB3) from Methanococcus voltae.